The sequence spans 1385 residues: DNA-directed RNA polymerase subunit beta (1385 aa).

It belongs to the RNA polymerase beta chain family. As to quaternary structure, the RNAP catalytic core consists of 2 alpha, 1 beta, 1 beta' and 1 omega subunit. When a sigma factor is associated with the core the holoenzyme is formed, which can initiate transcription.

It carries out the reaction RNA(n) + a ribonucleoside 5'-triphosphate = RNA(n+1) + diphosphate. DNA-dependent RNA polymerase catalyzes the transcription of DNA into RNA using the four ribonucleoside triphosphates as substrates. In Sulfurovum sp. (strain NBC37-1), this protein is DNA-directed RNA polymerase subunit beta.